Here is a 572-residue protein sequence, read N- to C-terminus: Moesin (572 aa).

An FERM domain is found at 1–294; sequence MPRGVAVRVT…GNHELYMRRR (294 aa). 2 disordered regions span residues 444–508 and 523–544; these read SQER…SYLP and LQAM…QENI. Residues 454-475 are compositionally biased toward low complexity; sequence AQEAAAAQHAAQLAAQREAQQL. Residues 480 to 502 are compositionally biased toward acidic residues; it reads EGEEDEQDHELEVQQDDNDDLDD. Positions 525–544 are enriched in basic and acidic residues; it reads AMKDESKGEDRYDKIHQENI.

It localises to the cell membrane. Its subcellular location is the cytoplasm. The protein localises to the cytoskeleton. It is found in the cell projection. Functionally, probably involved in connections of major cytoskeletal structures to the plasma membrane. The protein is Moesin of Lytechinus variegatus (Green sea urchin).